The primary structure comprises 260 residues: Vaa serine proteinase homolog 1 (260 aa).

An N-terminal signal peptide occupies residues 1–18 (MVLIRVLANLLVLQLSYA). The propeptide occupies 19 to 24 (QKSSEL). The region spanning 25 to 251 (VIGGDECNIN…YTDWIQSIIA (227 aa)) is the Peptidase S1 domain. 6 disulfides stabilise this stretch: Cys31-Cys165, Cys52-Cys68, Cys100-Cys258, Cys144-Cys212, Cys176-Cys191, and Cys202-Cys227. N-linked (GlcNAc...) asparagine glycosylation is present at Asn123. A key residues for binding to FVIIIa region spans residues 172 to 186 (DYSVCQKVYRKLPEK). Residue Asn253 is glycosylated (N-linked (GlcNAc...) asparagine).

The protein belongs to the peptidase S1 family. Snake venom subfamily. In terms of processing, N-glycosylated. The toxin exists in multiple glycoforms. In terms of tissue distribution, expressed by the venom gland.

Its subcellular location is the secreted. This is the first member of the serine protease family that has strong anticoagulant activity and lacks enzymatic activity. It inhibits activities of three blood coagulation complexes: (1) prothrombinase complex (composed of blood coagulation factors Va and Xa (F5 and F10)) (IC(50)=164.1 nM), (2) intrinsic tenase complex (composed of factors VIIIa and IXa (F8 and F9)), and (3) extrinsic tenase complex (composed of tissue factor and factor VIIa (F7)). The toxin also has been observed to bind prothrombin, factor FVa, non-activated and activated forms of factors FVII (F7) (FVII and FVIIa), factor FVIIIa (F8), factors FIX and FIXa (F9) and factors FX and FXa (F10). The toxin inhibits the activity of the intrinsic tenase complex mainly by competing with FIXa (F9) for binding to FVIIIa (F8). This is Vaa serine proteinase homolog 1 from Vipera ammodytes ammodytes (Western sand viper).